A 359-amino-acid polypeptide reads, in one-letter code: MSIKKLFAETFLAWMNGETASQSDIVISSRVRLARNLSDIAFPHLLNQESGQKFMQLIYEAWQKSEFKELKQMELVTFENLSALDRKILVEKHLISPNHAQSTAFYQGLLVKPDGSLAVMINEEDHLRIQCFLPGLQLEEAYRRAQEIDDALEKELDFAFDDRRGYLTSCPTNIGTGMRASLMLHLPAITISGQSGHIFQNLNQLGLTVRGIYGEGTEAIGNFFQLSNQITLGQSEEDINASLTTISQQVIEQERMLRKSLREQMKYQLEDRIGRAYGILTHARLISSNEALTLLSDVRLGVDMGMIPRISPNALNELVVDIRPAHLQKKAGSDMDAVSRDAKRAEVIREKLQTGEEGS.

A Phosphagen kinase C-terminal domain is found at 25–257 (IVISSRVRLA…QQVIEQERML (233 aa)). ATP is bound by residues 28–32 (SSRVR), His-93, Arg-128, 179–183 (RASLM), and 210–215 (RGIYGE). The short motif at 340–345 (RDAKRA) is the RDXXRA motif of the pArg binding pocket involved in allosteric regulation element.

Belongs to the ATP:guanido phosphotransferase family.

It carries out the reaction L-arginyl-[protein] + ATP = N(omega)-phospho-L-arginyl-[protein] + ADP + H(+). Its activity is regulated as follows. Appears to be allosterically activated by the binding of pArg-containing polypeptides to the pArg-binding pocket localized in the C-terminal domain of McsB. Catalyzes the specific phosphorylation of arginine residues in proteins. The polypeptide is Protein-arginine kinase (Syntrophomonas wolfei subsp. wolfei (strain DSM 2245B / Goettingen)).